The sequence spans 240 residues: Sugar fermentation stimulation protein homolog (240 aa).

The protein belongs to the SfsA family.

This is Sugar fermentation stimulation protein homolog from Saccharolobus solfataricus (strain ATCC 35092 / DSM 1617 / JCM 11322 / P2) (Sulfolobus solfataricus).